Reading from the N-terminus, the 382-residue chain is Adenosine 3'-phospho 5'-phosphosulfate transporter 2 (382 aa).

Residues 1 to 10 show a composition bias toward polar residues; sequence MSVSNRNGNG. The disordered stretch occupies residues 1–33; it reads MSVSNRNGNGSEVIYVGDRSTNRPPRNAPSPDE. The next 10 membrane-spanning stretches (helical) occupy residues 56–76, 83–103, 121–141, 144–164, 170–190, 197–217, 234–254, 271–291, 299–319, and 323–343; these read LCCAGVFVLYLLYGYMQELIF, PYGWFLTLVQFAYYTVFGYVE, VLLAFLTLGTMGLSNSSLGYL, PTQVIFKCCKLVPVLIGSILI, GPLDFLAAIAMCLGLTLFTLA, NFNPFGVLLISLALLCDAAIG, VVIYSYGIGFVYLSVIMLLTG, FGYAFLFSLSGYLGIQIVLTL, LAATVTTARKAVTIALSFVFF, and FTINYLWSGLIVVLGIYLNVY.

It belongs to the nucleotide-sugar transporter family. SLC35B subfamily.

The protein localises to the golgi apparatus membrane. Mediates the transport of adenosine 3'-phospho 5'-phosphosulfate (PAPS), from cytosol into Golgi. PAPS is a universal sulfuryl donor for sulfation events that take place in the Golgi. Essential for viability. Involved in glycosaminoglycan synthesis and the subsequent signaling. May be involved in hh and dpp signaling by controlling the sulfation of heparan sulfate (HS). In Aedes aegypti (Yellowfever mosquito), this protein is Adenosine 3'-phospho 5'-phosphosulfate transporter 2.